The chain runs to 122 residues: Large ribosomal subunit protein uL14c (122 aa).

Belongs to the universal ribosomal protein uL14 family. Part of the 50S ribosomal subunit.

It localises to the plastid. The protein resides in the cyanelle. Binds to 23S rRNA. This is Large ribosomal subunit protein uL14c from Cyanophora paradoxa.